Here is a 991-residue protein sequence, read N- to C-terminus: UPF0182 protein RHA1_ro08670 (991 aa).

7 consecutive transmembrane segments (helical) span residues 16–36 (VMIM…RLVV), 61–81 (LILF…AVVW), 115–135 (FTVG…QASW), 170–190 (LILA…LGTH), 214–234 (VQLA…YWLD), 263–283 (RLIM…AIAV), and 291–311 (MATA…PALI). A disordered region spans residues 902-940 (TGAVATAPGGDATTPPPTGGQPPAPPPPGAPPAPPPATS). Over residues 903 to 914 (GAVATAPGGDAT) the composition is skewed to low complexity. Pro residues predominate over residues 915–938 (TPPPTGGQPPAPPPPGAPPAPPPA).

This sequence belongs to the UPF0182 family.

It localises to the cell membrane. This Rhodococcus jostii (strain RHA1) protein is UPF0182 protein RHA1_ro08670.